We begin with the raw amino-acid sequence, 232 residues long: Nucleoside diphosphate kinase 2, chloroplastic (232 aa).

The N-terminal 79 residues, 1-79, are a transit peptide targeting the chloroplast; it reads MGCLSVVGAS…TRIFLPHLVA (79 aa). Positions 92, 140, 168, 174, 185, and 195 each coordinate ATP. Residue H198 is the Pros-phosphohistidine intermediate of the active site.

Belongs to the NDK family. Mg(2+) is required as a cofactor.

Its subcellular location is the plastid. It localises to the chloroplast. It carries out the reaction a 2'-deoxyribonucleoside 5'-diphosphate + ATP = a 2'-deoxyribonucleoside 5'-triphosphate + ADP. The enzyme catalyses a ribonucleoside 5'-diphosphate + ATP = a ribonucleoside 5'-triphosphate + ADP. Functionally, major role in the synthesis of nucleoside triphosphates other than ATP. The ATP gamma phosphate is transferred to the NDP beta phosphate via a ping-pong mechanism, using a phosphorylated active-site intermediate. The polypeptide is Nucleoside diphosphate kinase 2, chloroplastic (Nicotiana tabacum (Common tobacco)).